The primary structure comprises 265 residues: Arginine and glutamate-rich protein 1 (265 aa).

Residues 1-54 (MGRSRSRSSSRSKHAKSGKHNKKRSRSREKERVRKRSKSRESKRNRRRESRSRS) show a composition bias toward basic residues. The necessary and sufficient for RNA binding stretch occupies residues 1–66 (MGRSRSRSSS…NTASRRERER (66 aa)). The disordered stretch occupies residues 1–106 (MGRSRSRSSS…EKKAEYERQR (106 aa)). Basic and acidic residues-rich tracts occupy residues 60-76 (SRRE…RIDI) and 85-106 (SSLD…ERQR). The tract at residues 67 to 265 (AASPPDRIDI…KLSFSLKSPD (199 aa)) is necessary and sufficient for transcriptional regulation. Positions 164-168 (LLEEL) match the LXXLL motif 1; degenerate motif. The short motif at 193-197 (LERIL) is the LXXLL motif 2; degenerate element. Residues 229–245 (RMKLEQERQRQQKEEQK) are compositionally biased toward basic and acidic residues. The interval 229–265 (RMKLEQERQRQQKEEQKIILGKGKSRPKLSFSLKSPD) is disordered.

It belongs to the ARGLU1 family.

It localises to the nucleus. The protein localises to the nucleus speckle. The protein resides in the chromosome. Dual function regulator of gene expression; regulator of transcription and modulator of alternative splicing. General coactivator of nuclear receptor-induced gene expression. The protein is Arginine and glutamate-rich protein 1 (arglu1) of Xenopus tropicalis (Western clawed frog).